Reading from the N-terminus, the 412-residue chain is Argininosuccinate synthase (412 aa).

ATP contacts are provided by residues 12 to 20 (AYSGGLDTS) and A39. Residues Y91 and S96 each contribute to the L-citrulline site. G121 provides a ligand contact to ATP. Residues T123, N127, and D128 each contribute to the L-aspartate site. N127 provides a ligand contact to L-citrulline. 5 residues coordinate L-citrulline: R131, S180, S189, E265, and Y277.

Belongs to the argininosuccinate synthase family. Type 1 subfamily. As to quaternary structure, homotetramer.

It localises to the cytoplasm. It carries out the reaction L-citrulline + L-aspartate + ATP = 2-(N(omega)-L-arginino)succinate + AMP + diphosphate + H(+). It participates in amino-acid biosynthesis; L-arginine biosynthesis; L-arginine from L-ornithine and carbamoyl phosphate: step 2/3. The sequence is that of Argininosuccinate synthase from Pseudoalteromonas atlantica (strain T6c / ATCC BAA-1087).